Consider the following 405-residue polypeptide: Tryptophan synthase beta chain (405 aa).

N6-(pyridoxal phosphate)lysine is present on Lys-96.

The protein belongs to the TrpB family. In terms of assembly, tetramer of two alpha and two beta chains. Pyridoxal 5'-phosphate is required as a cofactor.

It carries out the reaction (1S,2R)-1-C-(indol-3-yl)glycerol 3-phosphate + L-serine = D-glyceraldehyde 3-phosphate + L-tryptophan + H2O. It participates in amino-acid biosynthesis; L-tryptophan biosynthesis; L-tryptophan from chorismate: step 5/5. Its function is as follows. The beta subunit is responsible for the synthesis of L-tryptophan from indole and L-serine. In Clostridium botulinum (strain Alaska E43 / Type E3), this protein is Tryptophan synthase beta chain.